The sequence spans 42 residues: Photosystem I reaction center subunit IX (42 aa).

Residues 7–27 (FLSSAPVLIMALLTFTAGILI) traverse the membrane as a helical segment.

Belongs to the PsaJ family.

The protein localises to the cellular thylakoid membrane. May help in the organization of the PsaE and PsaF subunits. The protein is Photosystem I reaction center subunit IX of Microcystis aeruginosa (strain NIES-843 / IAM M-2473).